The primary structure comprises 258 residues: Phycoerythrobilin:ferredoxin oxidoreductase (258 aa).

The protein belongs to the HY2 family.

The enzyme catalyses (3Z)-phycoerythrobilin + oxidized 2[4Fe-4S]-[ferredoxin] = 15,16-dihydrobiliverdin + reduced 2[4Fe-4S]-[ferredoxin] + 2 H(+). Functionally, catalyzes the two-electron reduction of the C2 and C3(1) diene system of 15,16-dihydrobiliverdin. The sequence is that of Phycoerythrobilin:ferredoxin oxidoreductase from Prochlorococcus marinus (strain NATL1A).